A 433-amino-acid chain; its full sequence is DNA polymerase processivity factor (433 aa).

The disordered stretch occupies residues 274-433 (RGDPFDKNYV…VPNTKKQKCG (160 aa)). Composition is skewed to gly residues over residues 289–298 (SRGGGGGGGS), 325–336 (GLGGLGGGGGGG), and 344–359 (GGGG…GGGG). Positions 360 to 376 (GDHDHGLSSKEKYEQHK) are enriched in basic and acidic residues. A compositionally biased stretch (gly residues) spans 385–398 (GGSGGGGGGGGGGL). Residue Lys-410 forms a Glycyl lysine isopeptide (Lys-Gly) (interchain with G-Cter in host SUMO1) linkage. Ser-413, Ser-415, and Ser-418 each carry phosphoserine.

The protein belongs to the herpesviridae polymerase accessory protein family. As to quaternary structure, forms homodimers. Interacts with host SMARCB1. Interacts with host NCL/nucleolin; this interaction is important for the organization of proteins within viral replication compartments. Interacts with UL112/UL113; this interaction is necessary for efficient viral DNA replication. Interacts with UL84. Interacts with the uracil DNA glycosylase UL114. Interacts with the DNA polymerase catalytic subunit UL54. Interacts with host IRF3. Interacts with host RELA. In terms of processing, phosphorylated by UL97 on serine residues, phosphorylation seems important for UL44 nuclear entry but does not directly affect its role in replication. Post-translationally, sumoylated. Sumoylation on Lys-410 increases viral DNA replication.

It localises to the virion. It is found in the host nucleus. Functionally, accessory subunit of the DNA polymerase that plays an essential role in viral DNA replication and acts by increasing the processivity of polymerization. Forms dimers that binds to double-stranded DNA and UL54 specifically to stimulates long chain DNA synthesis efficiently. Plays an important role in maintaining the structure of viral replication compartments by interacting with host nucleolin/NUC. In addition, suppresses innate immune responses through effects on host IRF3 and NF-kappa-B. Mechanistically, interfere with the binding of IRF3 and the p65 NF-kappa-B subunit to the promoters of antiviral genes, thereby inhibiting the expression of these genes. This chain is DNA polymerase processivity factor (UL44), found in Homo sapiens (Human).